A 236-amino-acid polypeptide reads, in one-letter code: NAD-dependent protein deacetylase (236 aa).

The 236-residue stretch at 1–236 (MIKDWLQESN…EFLRSISNEG (236 aa)) folds into the Deacetylase sirtuin-type domain. Residues Ala18, Thr22, Phe29, Arg30, Gln96, Val98, Asp99, and His114 each coordinate NAD(+). Nicotinamide is bound at residue Phe29. Residues Val98 and Asp99 each contribute to the nicotinamide site. His114 (proton acceptor) is an active-site residue. Cys122, Cys125, Cys141, and Cys143 together coordinate Zn(2+). Residues Ser181, Ser182, Asn206, and Ile225 each coordinate NAD(+).

The protein belongs to the sirtuin family. Class U subfamily. Zn(2+) is required as a cofactor.

It is found in the cytoplasm. It carries out the reaction N(6)-acetyl-L-lysyl-[protein] + NAD(+) + H2O = 2''-O-acetyl-ADP-D-ribose + nicotinamide + L-lysyl-[protein]. NAD-dependent protein deacetylase which modulates the activities of several enzymes which are inactive in their acetylated form. In Oceanobacillus iheyensis (strain DSM 14371 / CIP 107618 / JCM 11309 / KCTC 3954 / HTE831), this protein is NAD-dependent protein deacetylase.